The chain runs to 138 residues: Nucleoside diphosphate kinase (138 aa).

ATP contacts are provided by Lys9, Phe57, Arg85, Thr91, Arg102, and Asn112. His120 functions as the Pros-phosphohistidine intermediate in the catalytic mechanism.

It belongs to the NDK family. As to quaternary structure, homotetramer. It depends on Mg(2+) as a cofactor.

The protein resides in the cytoplasm. The catalysed reaction is a 2'-deoxyribonucleoside 5'-diphosphate + ATP = a 2'-deoxyribonucleoside 5'-triphosphate + ADP. It carries out the reaction a ribonucleoside 5'-diphosphate + ATP = a ribonucleoside 5'-triphosphate + ADP. Major role in the synthesis of nucleoside triphosphates other than ATP. The ATP gamma phosphate is transferred to the NDP beta phosphate via a ping-pong mechanism, using a phosphorylated active-site intermediate. This Streptococcus agalactiae serotype III (strain NEM316) protein is Nucleoside diphosphate kinase.